The chain runs to 32 residues: Photosystem II reaction center protein T (32 aa).

A helical membrane pass occupies residues Ala-3–Phe-23.

This sequence belongs to the PsbT family. In terms of assembly, PSII is composed of 1 copy each of membrane proteins PsbA, PsbB, PsbC, PsbD, PsbE, PsbF, PsbH, PsbI, PsbJ, PsbK, PsbL, PsbM, PsbT, PsbX, PsbY, PsbZ, Psb30/Ycf12, peripheral proteins PsbO, CyanoQ (PsbQ), PsbU, PsbV and a large number of cofactors. It forms dimeric complexes.

It is found in the cellular thylakoid membrane. Functionally, found at the monomer-monomer interface of the photosystem II (PS II) dimer, plays a role in assembly and dimerization of PSII. PSII is a light-driven water plastoquinone oxidoreductase, using light energy to abstract electrons from H(2)O, generating a proton gradient subsequently used for ATP formation. The polypeptide is Photosystem II reaction center protein T (Synechococcus sp. (strain JA-2-3B'a(2-13)) (Cyanobacteria bacterium Yellowstone B-Prime)).